A 193-amino-acid polypeptide reads, in one-letter code: Peptide deformylase (193 aa).

Cys-111 and His-155 together coordinate Fe cation. The active site involves Glu-156. His-159 is a binding site for Fe cation.

This sequence belongs to the polypeptide deformylase family. The cofactor is Fe(2+).

It carries out the reaction N-terminal N-formyl-L-methionyl-[peptide] + H2O = N-terminal L-methionyl-[peptide] + formate. In terms of biological role, removes the formyl group from the N-terminal Met of newly synthesized proteins. Requires at least a dipeptide for an efficient rate of reaction. N-terminal L-methionine is a prerequisite for activity but the enzyme has broad specificity at other positions. In Mycoplasma genitalium (strain ATCC 33530 / DSM 19775 / NCTC 10195 / G37) (Mycoplasmoides genitalium), this protein is Peptide deformylase.